The chain runs to 126 residues: Large ribosomal subunit protein uL24 (126 aa).

The segment at 1-23 (MKFSRDVTSSRRKQRKAHFGAPS) is disordered.

The protein belongs to the universal ribosomal protein uL24 family. In terms of assembly, component of the large ribosomal subunit (LSU). Mature yeast ribosomes consist of a small (40S) and a large (60S) subunit. The 40S small subunit contains 1 molecule of ribosomal RNA (18S rRNA) and at least 33 different proteins. The large 60S subunit contains 3 rRNA molecules (25S, 5.8S and 5S rRNA) and at least 46 different proteins.

Its subcellular location is the cytoplasm. The protein resides in the nucleus. It is found in the nucleolus. Functionally, component of the ribosome, a large ribonucleoprotein complex responsible for the synthesis of proteins in the cell. The small ribosomal subunit (SSU) binds messenger RNAs (mRNAs) and translates the encoded message by selecting cognate aminoacyl-transfer RNA (tRNA) molecules. The large subunit (LSU) contains the ribosomal catalytic site termed the peptidyl transferase center (PTC), which catalyzes the formation of peptide bonds, thereby polymerizing the amino acids delivered by tRNAs into a polypeptide chain. The nascent polypeptides leave the ribosome through a tunnel in the LSU and interact with protein factors that function in enzymatic processing, targeting, and the membrane insertion of nascent chains at the exit of the ribosomal tunnel. The chain is Large ribosomal subunit protein uL24 (rpl26) from Schizosaccharomyces pombe (strain 972 / ATCC 24843) (Fission yeast).